Consider the following 469-residue polypeptide: Glutamate--tRNA ligase (469 aa).

Residues 11-21 carry the 'HIGH' region motif; sequence PSPTGFIHLGN. The segment covering 114-131 has biased composition (basic and acidic residues); it reads QREAGEKPRYDGTWRPEP. Residues 114 to 139 are disordered; that stretch reads QREAGEKPRYDGTWRPEPGKVLPEPP. The 'KMSKS' region signature appears at 243-247; that stretch reads KMSKR. K246 is an ATP binding site.

It belongs to the class-I aminoacyl-tRNA synthetase family. Glutamate--tRNA ligase type 1 subfamily. As to quaternary structure, monomer.

Its subcellular location is the cytoplasm. The catalysed reaction is tRNA(Glu) + L-glutamate + ATP = L-glutamyl-tRNA(Glu) + AMP + diphosphate. In terms of biological role, catalyzes the attachment of glutamate to tRNA(Glu) in a two-step reaction: glutamate is first activated by ATP to form Glu-AMP and then transferred to the acceptor end of tRNA(Glu). The polypeptide is Glutamate--tRNA ligase (Paraburkholderia phytofirmans (strain DSM 17436 / LMG 22146 / PsJN) (Burkholderia phytofirmans)).